The sequence spans 342 residues: Glucokinase (342 aa).

18-23 (GDIGGT) provides a ligand contact to ATP.

This sequence belongs to the bacterial glucokinase family.

It localises to the cytoplasm. It catalyses the reaction D-glucose + ATP = D-glucose 6-phosphate + ADP + H(+). This chain is Glucokinase, found in Chelativorans sp. (strain BNC1).